A 212-amino-acid polypeptide reads, in one-letter code: N-(5'-phosphoribosyl)anthranilate isomerase (212 aa).

The protein belongs to the TrpF family.

The catalysed reaction is N-(5-phospho-beta-D-ribosyl)anthranilate = 1-(2-carboxyphenylamino)-1-deoxy-D-ribulose 5-phosphate. It participates in amino-acid biosynthesis; L-tryptophan biosynthesis; L-tryptophan from chorismate: step 3/5. The chain is N-(5'-phosphoribosyl)anthranilate isomerase from Myxococcus xanthus (strain DK1622).